The chain runs to 291 residues: Polyamine aminopropyltransferase (291 aa).

The 241-residue stretch at 5 to 245 (PGPVSLIEPL…YAVNYIIGSL (241 aa)) folds into the PABS domain. S-methyl-5'-thioadenosine is bound at residue Q36. The spermidine site is built by H67 and E91. S-methyl-5'-thioadenosine contacts are provided by residues D111 and 143–144 (DG). D164 acts as the Proton acceptor in catalysis.

This sequence belongs to the spermidine/spermine synthase family. In terms of assembly, homodimer or homotetramer.

The protein localises to the cytoplasm. The enzyme catalyses S-adenosyl 3-(methylsulfanyl)propylamine + putrescine = S-methyl-5'-thioadenosine + spermidine + H(+). It functions in the pathway amine and polyamine biosynthesis; spermidine biosynthesis; spermidine from putrescine: step 1/1. Its function is as follows. Catalyzes the irreversible transfer of a propylamine group from the amino donor S-adenosylmethioninamine (decarboxy-AdoMet) to putrescine (1,4-diaminobutane) to yield spermidine. The chain is Polyamine aminopropyltransferase from Pyrobaculum islandicum (strain DSM 4184 / JCM 9189 / GEO3).